An 84-amino-acid polypeptide reads, in one-letter code: DNA-directed RNA polymerase subunit Rpo5 (84 aa).

This sequence belongs to the archaeal Rpo5/eukaryotic RPB5 RNA polymerase subunit family. In terms of assembly, part of the 13-subunit RNA polymerase complex.

Its subcellular location is the cytoplasm. It catalyses the reaction RNA(n) + a ribonucleoside 5'-triphosphate = RNA(n+1) + diphosphate. In terms of biological role, DNA-dependent RNA polymerase (RNAP) catalyzes the transcription of DNA into RNA using the four ribonucleoside triphosphates as substrates. The chain is DNA-directed RNA polymerase subunit Rpo5 from Saccharolobus solfataricus (strain ATCC 35092 / DSM 1617 / JCM 11322 / P2) (Sulfolobus solfataricus).